The chain runs to 434 residues: Enolase (434 aa).

Q168 contributes to the (2R)-2-phosphoglycerate binding site. Catalysis depends on E210, which acts as the Proton donor. Mg(2+) contacts are provided by D247, E292, and D319. (2R)-2-phosphoglycerate is bound by residues K344, R373, S374, and K395. The active-site Proton acceptor is K344.

It belongs to the enolase family. Mg(2+) is required as a cofactor.

The protein localises to the cytoplasm. The protein resides in the secreted. It localises to the cell surface. The enzyme catalyses (2R)-2-phosphoglycerate = phosphoenolpyruvate + H2O. The protein operates within carbohydrate degradation; glycolysis; pyruvate from D-glyceraldehyde 3-phosphate: step 4/5. Catalyzes the reversible conversion of 2-phosphoglycerate (2-PG) into phosphoenolpyruvate (PEP). It is essential for the degradation of carbohydrates via glycolysis. The polypeptide is Enolase (Endomicrobium trichonymphae).